Consider the following 530-residue polypeptide: MFRPVLKVRPSFSYPYSIVSSRSVRLASTATANANTAAATSTVAAHGTQETPFDFEGHFESELAKKRLDKSYRYFNNINRLAKEFPLAHRQLEDDKVTVWCSNDYLALSKNPQVLDAMRKTIDKYGAGAGGTRNIAGHNIPTMRLEAELAALHKKEGALVFSSCYVANDAVISLLGQKVKDLVIFSDELNHASMIVGIKHANRPKHIFRHNDLAQLEEMLQMYPKSTPKLIAFESVYSMAGSVADINKICDLAEKYGALTFLDEVHAVGLYGPHGAGVAEHCDFEAHRVAGIATPPQGDNGRLRTVMDRVDMITGTLGKSFGTVGGYVAASSKLIDWVRSYAPGFIFTTTLPPAVMAGAAEAIRFQRSHLNLRQDQQRHTAYVKKGLHDLGIPVIPNPSHIVPVLIGNPDLAKQASDILMEKHRIYVQAINFPTVSRGTERLRITPTPGHTNDLSDILIAAVDDVFNELQLPRIRDWEMQGGLLGVGDKNFVPEPNLWTEEQLSFSNEDLNSNVFEPVIDQLEVSSGVKL.

The transit peptide at 1 to 26 directs the protein to the mitochondrion; that stretch reads MFRPVLKVRPSFSYPYSIVSSRSVRL. Residues Arg73, Ser186, and Lys205 each coordinate substrate. Pyridoxal 5'-phosphate is bound by residues Ser238, His266, and Thr316. The active site involves Lys319. Lys319 is subject to N6-(pyridoxal phosphate)lysine. Pyridoxal 5'-phosphate contacts are provided by Thr348 and Thr349. Residue Thr434 participates in substrate binding.

Belongs to the class-II pyridoxal-phosphate-dependent aminotransferase family. In terms of assembly, homodimer. It depends on pyridoxal 5'-phosphate as a cofactor.

The protein localises to the mitochondrion matrix. The catalysed reaction is succinyl-CoA + glycine + H(+) = 5-aminolevulinate + CO2 + CoA. The protein operates within porphyrin-containing compound metabolism; protoporphyrin-IX biosynthesis; 5-aminolevulinate from glycine: step 1/1. Catalyzes the synthesis of 5-aminolevulinate (ALA) from succinyl-CoA and glycine, the first and rate-limiting step in heme biosynthesis. The chain is 5-aminolevulinate synthase, mitochondrial (HEM1) from Candida glabrata (strain ATCC 2001 / BCRC 20586 / JCM 3761 / NBRC 0622 / NRRL Y-65 / CBS 138) (Yeast).